The chain runs to 364 residues: Aminomethyltransferase (364 aa).

This sequence belongs to the GcvT family. As to quaternary structure, the glycine cleavage system is composed of four proteins: P, T, L and H.

It carries out the reaction N(6)-[(R)-S(8)-aminomethyldihydrolipoyl]-L-lysyl-[protein] + (6S)-5,6,7,8-tetrahydrofolate = N(6)-[(R)-dihydrolipoyl]-L-lysyl-[protein] + (6R)-5,10-methylene-5,6,7,8-tetrahydrofolate + NH4(+). Functionally, the glycine cleavage system catalyzes the degradation of glycine. The protein is Aminomethyltransferase of Escherichia coli O6:H1 (strain CFT073 / ATCC 700928 / UPEC).